The following is a 101-amino-acid chain: Urease subunit beta (101 aa).

The protein belongs to the urease beta subunit family. In terms of assembly, heterotrimer of UreA (gamma), UreB (beta) and UreC (alpha) subunits. Three heterotrimers associate to form the active enzyme.

It is found in the cytoplasm. The catalysed reaction is urea + 2 H2O + H(+) = hydrogencarbonate + 2 NH4(+). Its pathway is nitrogen metabolism; urea degradation; CO(2) and NH(3) from urea (urease route): step 1/1. The chain is Urease subunit beta from Rhizobium johnstonii (strain DSM 114642 / LMG 32736 / 3841) (Rhizobium leguminosarum bv. viciae).